Here is a 2151-residue protein sequence, read N- to C-terminus: Protein PRR14L (2151 aa).

Basic and acidic residues-rich tracts occupy residues 112-123 and 134-154; these read KRSESMEPKVFR and EPSEGAKEDPHQHSTAAEEKT. 3 disordered regions span residues 112–160, 206–225, and 314–350; these read KRSE…SQED, GTKTDNNEGHKNGNVSKDLS, and QLHGHHNEQPSSTHDSPTATSPLKENSEVSCFTSDLS. S157 carries the post-translational modification Phosphoserine. Positions 322 to 350 are enriched in polar residues; it reads QPSSTHDSPTATSPLKENSEVSCFTSDLS. S582 and S945 each carry phosphoserine. Positions 974–1017 are disordered; it reads SNQNRPDECKSEGQSAKEMLSSDQRETVTEPHGEVNHNQKDLLV. Positions 996–1013 are enriched in basic and acidic residues; the sequence is DQRETVTEPHGEVNHNQK. A Phosphoserine modification is found at S1029. A compositionally biased stretch (basic and acidic residues) spans 1091 to 1103; the sequence is DSRSTLSRRELDA. Disordered stretches follow at residues 1091-1115, 1178-1226, 1782-1802, and 1986-2012; these read DSRSTLSRRELDAAHTGTTGQDSDF, DSHY…SCHD, TGVHSQTHTQAPPQPPAPLQD, and AACPCPQSSPPEQKEAEPEKRPKKVSQ. Polar residues predominate over residues 1178–1187; that stretch reads DSHYGQQDKG. A compositionally biased stretch (basic and acidic residues) spans 1188–1201; sequence TSLRETQEMTEGSR.

The sequence is that of Protein PRR14L (PRR14L) from Homo sapiens (Human).